We begin with the raw amino-acid sequence, 305 residues long: Tyrosine recombinase XerC (305 aa).

The 93-residue stretch at 1–93 (MVLDGFAAYF…AWRQYCAWLV (93 aa)) folds into the Core-binding (CB) domain. In terms of domain architecture, Tyr recombinase spans 114–294 (RVPKALPQEW…DFDHIARLYD (181 aa)). Active-site residues include Arg-155, Lys-179, His-246, Arg-249, and His-272. Tyr-281 functions as the O-(3'-phospho-DNA)-tyrosine intermediate in the catalytic mechanism.

This sequence belongs to the 'phage' integrase family. XerC subfamily. In terms of assembly, forms a cyclic heterotetrameric complex composed of two molecules of XerC and two molecules of XerD.

The protein resides in the cytoplasm. Functionally, site-specific tyrosine recombinase, which acts by catalyzing the cutting and rejoining of the recombining DNA molecules. The XerC-XerD complex is essential to convert dimers of the bacterial chromosome into monomers to permit their segregation at cell division. It also contributes to the segregational stability of plasmids. The polypeptide is Tyrosine recombinase XerC (Neisseria gonorrhoeae (strain ATCC 700825 / FA 1090)).